We begin with the raw amino-acid sequence, 115 residues long: NADH-ubiquinone oxidoreductase chain 3 (115 aa).

Transmembrane regions (helical) follow at residues 3–23 (FMLT…IAFW), 55–75 (FFLV…LLPL), and 84–104 (LEVM…SLAY).

It belongs to the complex I subunit 3 family. Core subunit of respiratory chain NADH dehydrogenase (Complex I) which is composed of 45 different subunits. Interacts with TMEM186. Interacts with TMEM242.

The protein resides in the mitochondrion inner membrane. The catalysed reaction is a ubiquinone + NADH + 5 H(+)(in) = a ubiquinol + NAD(+) + 4 H(+)(out). Its function is as follows. Core subunit of the mitochondrial membrane respiratory chain NADH dehydrogenase (Complex I) which catalyzes electron transfer from NADH through the respiratory chain, using ubiquinone as an electron acceptor. Essential for the catalytic activity of complex I. The sequence is that of NADH-ubiquinone oxidoreductase chain 3 from Rhinolophus pumilus (Horseshoe bat).